The chain runs to 413 residues: tRNA (guanine-N(7)-)-methyltransferase non-catalytic subunit WDR4 (413 aa).

Ala-2 carries the N-acetylalanine modification. 5 WD repeats span residues 61-100 (TGSD…CLSV), 102-141 (MVVR…GCGR), 145-185 (GHLS…IESF), 188-228 (GHTE…QLQC), and 289-329 (TFPH…WQAA). The segment at 380-413 (RLQQQLKKKRQRSPFPGSPEQTKKACPGQSALSC) is disordered. Phosphoserine occurs at positions 392 and 412.

Belongs to the WD repeat TRM82 family. Non-catalytic component of the METTL1-WDR4 complex, composed of METTL1 and WDR4. Interacts with FEN1; the interaction is direct.

Its subcellular location is the nucleus. It localises to the chromosome. It participates in tRNA modification; N(7)-methylguanine-tRNA biosynthesis. Functionally, non-catalytic component of the METTL1-WDR4 methyltransferase complex required for the formation of N(7)-methylguanine in a subset of RNA species, such as tRNAs, mRNAs and microRNAs (miRNAs). In the METTL1-WDR4 methyltransferase complex, WDR4 acts as a scaffold for tRNA-binding. Required for the formation of N(7)-methylguanine at position 46 (m7G46) in a large subset of tRNAs that contain the 5'-RAGGU-3' motif within the variable loop. M7G46 interacts with C13-G22 in the D-loop to stabilize tRNA tertiary structure and protect tRNAs from decay. Also required for the formation of N(7)-methylguanine at internal sites in a subset of mRNAs. Also required for methylation of a specific subset of miRNAs, such as let-7. Acts as a regulator of embryonic stem cell self-renewal and differentiation. Independently of METTL1, also plays a role in genome stability: localizes at the DNA replication site and regulates endonucleolytic activities of FEN1. The protein is tRNA (guanine-N(7)-)-methyltransferase non-catalytic subunit WDR4 of Mus musculus (Mouse).